A 258-amino-acid chain; its full sequence is MVLVRVVANLLILQLSYAQKVSELVVGGDECNINEHRSLVAIFNSTGFFCSGILLNQEWVLTASHCDSTNFQMKIGVHSKKTLNQDEQTRNPKEKIFCPNKKNDDALDKDLMLVRLDSPVSDSEHIAPLSLPSSPPSVGSVCRIMGWGSITPIQKTNPDVPHCANINLLDDAVCRAAYPELPAEYRTLCAGVPEGGIDTCNGDSGGPLICNGQFQGIVFYGAHPCGQAPKPGLYTKVIDYNTWIESVIAGNTAATCPP.

The N-terminal stretch at 1–18 (MVLVRVVANLLILQLSYA) is a signal peptide. The propeptide occupies 19–24 (QKVSEL). Positions 25–249 (VVGGDECNIN…YNTWIESVIA (225 aa)) constitute a Peptidase S1 domain. Disulfide bonds link C31–C163, C50–C66, C98–C256, C142–C210, C174–C189, and C200–C225. N-linked (GlcNAc...) asparagine glycosylation is present at N44. Residues H65 and D110 each act as charge relay system in the active site. S204 (charge relay system) is an active-site residue.

Belongs to the peptidase S1 family. Snake venom subfamily. As to quaternary structure, monomer. In terms of processing, N-glycosylated. Contains approximately 10% carbohydrates. As to expression, expressed by the venom gland.

It localises to the secreted. Inhibited by benzamidine, PMSF, leupeptin, SDS and DTT, but not by EDTA, and commercial antivenom. In terms of biological role, snake venom serine protease that shows non-specific action on fibrinogen. It preferentially degrades fibrinogen Aalpha (FGA), releasing fibrinopeptide A, and shows a lower activity on fibrinogen Bbeta (FGB), releasing fibrinopeptide B and other uncommon fibrinopeptides. Also shows low fibrinolytic activity compared to plasmin. Has high enzymatic activity on the substrates for activated protein C and factor XIa, and for thrombin. Shows a wide activity spectrum at different peptide sequences, with a preferential cleavage at Lys-|-Xaa over Arg-|-Xaa bonds. The polypeptide is Snake venom serine protease HS114 (Bothrops jararaca (Jararaca)).